The following is a 105-amino-acid chain: Nucleoid-associated protein cu1912 (105 aa).

This sequence belongs to the YbaB/EbfC family. Homodimer.

It localises to the cytoplasm. It is found in the nucleoid. Binds to DNA and alters its conformation. May be involved in regulation of gene expression, nucleoid organization and DNA protection. This Corynebacterium urealyticum (strain ATCC 43042 / DSM 7109) protein is Nucleoid-associated protein cu1912.